The primary structure comprises 176 residues: NAD(P)H-quinone oxidoreductase subunit 6, chloroplastic (176 aa).

5 helical membrane passes run 10 to 30, 32 to 52, 61 to 81, 93 to 115, and 152 to 172; these read FLLV…VLLT, PIYS…FYIP, AQLL…VMFM, WTVG…ITTI, and FFLP…GAIA.

The protein belongs to the complex I subunit 6 family. NDH is composed of at least 16 different subunits, 5 of which are encoded in the nucleus.

The protein resides in the plastid. It localises to the chloroplast thylakoid membrane. It catalyses the reaction a plastoquinone + NADH + (n+1) H(+)(in) = a plastoquinol + NAD(+) + n H(+)(out). The catalysed reaction is a plastoquinone + NADPH + (n+1) H(+)(in) = a plastoquinol + NADP(+) + n H(+)(out). In terms of biological role, NDH shuttles electrons from NAD(P)H:plastoquinone, via FMN and iron-sulfur (Fe-S) centers, to quinones in the photosynthetic chain and possibly in a chloroplast respiratory chain. The immediate electron acceptor for the enzyme in this species is believed to be plastoquinone. Couples the redox reaction to proton translocation, and thus conserves the redox energy in a proton gradient. This is NAD(P)H-quinone oxidoreductase subunit 6, chloroplastic (ndhG) from Vitis vinifera (Grape).